A 491-amino-acid chain; its full sequence is Cobyric acid synthase (491 aa).

A GATase cobBQ-type domain is found at 250–439; that stretch reads EVTIAVIRLP…LHGIFDNGAW (190 aa). The Nucleophile role is filled by Cys-331. The active site involves His-431.

It belongs to the CobB/CobQ family. CobQ subfamily.

The protein operates within cofactor biosynthesis; adenosylcobalamin biosynthesis. In terms of biological role, catalyzes amidations at positions B, D, E, and G on adenosylcobyrinic A,C-diamide. NH(2) groups are provided by glutamine, and one molecule of ATP is hydrogenolyzed for each amidation. The polypeptide is Cobyric acid synthase (Synechococcus elongatus (strain ATCC 33912 / PCC 7942 / FACHB-805) (Anacystis nidulans R2)).